The chain runs to 186 residues: UPF0200 protein PF1294 (186 aa).

Residue Gly7 to Gly14 participates in ATP binding.

This sequence belongs to the UPF0200 family.

This chain is UPF0200 protein PF1294, found in Pyrococcus furiosus (strain ATCC 43587 / DSM 3638 / JCM 8422 / Vc1).